Here is a 129-residue protein sequence, read N- to C-terminus: Phosphoribosyl-AMP cyclohydrolase (129 aa).

Asp-87 is a binding site for Mg(2+). Residue Cys-88 coordinates Zn(2+). Mg(2+)-binding residues include Asp-89 and Asp-91. Residues Cys-104 and Cys-111 each coordinate Zn(2+).

This sequence belongs to the PRA-CH family. In terms of assembly, homodimer. Requires Mg(2+) as cofactor. Zn(2+) is required as a cofactor.

It localises to the cytoplasm. The catalysed reaction is 1-(5-phospho-beta-D-ribosyl)-5'-AMP + H2O = 1-(5-phospho-beta-D-ribosyl)-5-[(5-phospho-beta-D-ribosylamino)methylideneamino]imidazole-4-carboxamide. It participates in amino-acid biosynthesis; L-histidine biosynthesis; L-histidine from 5-phospho-alpha-D-ribose 1-diphosphate: step 3/9. Functionally, catalyzes the hydrolysis of the adenine ring of phosphoribosyl-AMP. The sequence is that of Phosphoribosyl-AMP cyclohydrolase from Ruegeria sp. (strain TM1040) (Silicibacter sp.).